The chain runs to 420 residues: Arginine biosynthesis bifunctional protein ArgJ (420 aa).

Positions 167, 193, 204, 284, 415, and 420 each coordinate substrate. Thr-204 acts as the Nucleophile in catalysis.

The protein belongs to the ArgJ family. In terms of assembly, heterotetramer of two alpha and two beta chains.

Its subcellular location is the cytoplasm. The catalysed reaction is N(2)-acetyl-L-ornithine + L-glutamate = N-acetyl-L-glutamate + L-ornithine. It catalyses the reaction L-glutamate + acetyl-CoA = N-acetyl-L-glutamate + CoA + H(+). It participates in amino-acid biosynthesis; L-arginine biosynthesis; L-ornithine and N-acetyl-L-glutamate from L-glutamate and N(2)-acetyl-L-ornithine (cyclic): step 1/1. It functions in the pathway amino-acid biosynthesis; L-arginine biosynthesis; N(2)-acetyl-L-ornithine from L-glutamate: step 1/4. Its function is as follows. Catalyzes two activities which are involved in the cyclic version of arginine biosynthesis: the synthesis of N-acetylglutamate from glutamate and acetyl-CoA as the acetyl donor, and of ornithine by transacetylation between N(2)-acetylornithine and glutamate. This is Arginine biosynthesis bifunctional protein ArgJ from Prochlorococcus marinus (strain NATL2A).